The following is a 714-amino-acid chain: P-loop NTPase domain-containing protein LPA1 (714 aa).

The span at 1 to 11 (MPMPPQCASSK) shows a compositional bias: low complexity. Disordered stretches follow at residues 1–42 (MPMP…PPPK), 259–293 (QKLDIVSHPNTNEGRDDTSDDKAHHGSSELPPRTE), and 595–689 (FGSE…GSGN). Basic and acidic residues predominate over residues 271 to 285 (EGRDDTSDDKAHHGS). Positions 595-617 (FGSEEDADDPPDAGTDEDLTDEE) are enriched in acidic residues. Residues 618-636 (RDMHEIEAGSVDEHSTKSD) are compositionally biased toward basic and acidic residues. The span at 659–670 (AASSTKNSSNQE) shows a compositional bias: polar residues.

In terms of tissue distribution, expressed in roots, leaf blade shoots, leaf sheath shoots and panicles.

Its function is as follows. Required for the accumulation of phytic acid in seeds. Phytic acid is the primary storage form of phosphorus in cereal grains and other plant seeds. In Oryza sativa subsp. japonica (Rice), this protein is P-loop NTPase domain-containing protein LPA1.